The chain runs to 311 residues: tRNA-cytidine(32) 2-sulfurtransferase (311 aa).

Residues 47-52 (SGGKDS) carry the PP-loop motif motif. The [4Fe-4S] cluster site is built by C122, C125, and C213.

Belongs to the TtcA family. As to quaternary structure, homodimer. Mg(2+) is required as a cofactor. [4Fe-4S] cluster serves as cofactor.

Its subcellular location is the cytoplasm. It catalyses the reaction cytidine(32) in tRNA + S-sulfanyl-L-cysteinyl-[cysteine desulfurase] + AH2 + ATP = 2-thiocytidine(32) in tRNA + L-cysteinyl-[cysteine desulfurase] + A + AMP + diphosphate + H(+). Its pathway is tRNA modification. Functionally, catalyzes the ATP-dependent 2-thiolation of cytidine in position 32 of tRNA, to form 2-thiocytidine (s(2)C32). The sulfur atoms are provided by the cysteine/cysteine desulfurase (IscS) system. The polypeptide is tRNA-cytidine(32) 2-sulfurtransferase (Salmonella typhimurium (strain LT2 / SGSC1412 / ATCC 700720)).